The following is a 254-amino-acid chain: Decaprenylphosphoryl-2-keto-beta-D-erythro-pentose reductase (254 aa).

NAD(+) is bound at residue Asp-67. Tyr-160 acts as the Proton acceptor in catalysis. Residue Lys-164 coordinates NAD(+).

This sequence belongs to the short-chain dehydrogenases/reductases (SDR) family. Interacts with DprE1 to form an epimerase complex.

The protein localises to the periplasm. The enzyme catalyses trans,octa-cis-decaprenylphospho-beta-D-arabinofuranose + NAD(+) = trans,octa-cis-decaprenylphospho-beta-D-erythro-pentofuranosid-2-ulose + NADH + H(+). It participates in cell wall biogenesis; cell wall polysaccharide biosynthesis. Its function is as follows. Component of the DprE1-DprE2 complex that catalyzes the 2-step epimerization of decaprenyl-phospho-ribose (DPR) to decaprenyl-phospho-arabinose (DPA), a key precursor that serves as the arabinose donor required for the synthesis of cell-wall arabinans. DprE1 catalyzes the first step of epimerization, namely FAD-dependent oxidation of the C2' hydroxyl of DPR to yield the keto intermediate decaprenyl-phospho-2'-keto-D-arabinose (DPX). The intermediate DPX is then transferred to DprE2 subunit of the epimerase complex, most probably through a 'substrate channel' at the interface of DprE1-DprE2 complex. DprE2 then catalyzes the second step of epimerization, the NAD(+)-dependent reduction of DPX that leads to the formation of DPA. The chain is Decaprenylphosphoryl-2-keto-beta-D-erythro-pentose reductase from Mycobacterium bovis (strain ATCC BAA-935 / AF2122/97).